The sequence spans 89 residues: Small ribosomal subunit protein uS15 (89 aa).

The protein belongs to the universal ribosomal protein uS15 family. In terms of assembly, part of the 30S ribosomal subunit. Forms a bridge to the 50S subunit in the 70S ribosome, contacting the 23S rRNA.

Functionally, one of the primary rRNA binding proteins, it binds directly to 16S rRNA where it helps nucleate assembly of the platform of the 30S subunit by binding and bridging several RNA helices of the 16S rRNA. In terms of biological role, forms an intersubunit bridge (bridge B4) with the 23S rRNA of the 50S subunit in the ribosome. The protein is Small ribosomal subunit protein uS15 of Paracoccus denitrificans (strain Pd 1222).